Here is a 217-residue protein sequence, read N- to C-terminus: MOB kinase activator 3A (217 aa).

Residues Cys83, Cys88, His165, and His170 each coordinate Zn(2+).

Belongs to the MOB1/phocein family.

May regulate the activity of kinases. This is MOB kinase activator 3A (Mob3a) from Mus musculus (Mouse).